Consider the following 1184-residue polypeptide: Fibulin-2 (1184 aa).

An N-terminal signal peptide occupies residues 1-27 (MVLLWEPAGAWLALGLALALGPSVAAA). The tract at residues 28–177 (APRQDCTGVE…ELICYQLPGC (150 aa)) is subdomain NA (Cys-rich). Positions 28 to 444 (APRQDCTGVE…EGSTKDLIET (417 aa)) are n. Residues 178–444 (HGNFSDAEEG…EGSTKDLIET (267 aa)) are subdomain NB (Cys-free). A glycan (N-linked (GlcNAc...) asparagine) is linked at Asn180. Disordered regions lie at residues 221–293 (VQAG…MAVT) and 399–437 (IPPT…PEGS). Residues 224–236 (GAGGPPAALGGGS) show a composition bias toward gly residues. Positions 252-261 (PRPTAAAALG) are enriched in low complexity. A compositionally biased stretch (acidic residues) spans 276-288 (DSEEEEEEEEERE). Phosphoserine is present on Ser277. Residues 423-436 (PNSVHSIPRSSPEG) show a composition bias toward polar residues. Cystine bridges form between Cys445–Cys472, Cys446–Cys479, Cys459–Cys480, Cys489–Cys518, Cys502–Cys519, Cys521–Cys545, Cys522–Cys552, Cys535–Cys553, Cys608–Cys620, Cys616–Cys629, Cys631–Cys644, Cys683–Cys693, Cys689–Cys702, Cys704–Cys717, Cys723–Cys736, Cys730–Cys745, Cys751–Cys762, Cys768–Cys781, Cys775–Cys790, Cys796–Cys808, Cys814–Cys827, Cys821–Cys836, Cys843–Cys856, Cys862–Cys875, Cys869–Cys884, Cys886–Cys899, Cys905–Cys917, Cys913–Cys926, Cys928–Cys941, Cys947–Cys956, Cys952–Cys965, Cys967–Cys980, Cys986–Cys998, Cys994–Cys1007, Cys1009–Cys1023, Cys1029–Cys1042, Cys1036–Cys1051, and Cys1056–Cys1068. Anaphylatoxin-like domains follow at residues 445–480 (CCAA…RHCC), 488–519 (SCMA…KQCC), and 521–553 (CCGL…LSCC). N-linked (GlcNAc...) asparagine glycosylation is present at Asn507. The 42-residue stretch at 604 to 645 (DQDECLLLPGELCQHLCINTVGSYHCACFPGFSLQDDGRTCR) folds into the EGF-like 1; calcium-binding domain. The 40-residue stretch at 679-718 (QPNTCKDNGPCKQVCSTVGGSAICSCFPGYAIMADGVSCE) folds into the EGF-like 2 domain. The EGF-like 3; calcium-binding domain occupies 719–763 (DINECVTDLHTCSRGEHCVNTLGSFHCYKALTCEPGYALKDGECE). The region spanning 764–809 (DVDECAMGTHTCQPGFLCQNTKGSFYCQARQRCMDGFLQDPEGNCV) is the EGF-like 4; calcium-binding domain. An EGF-like 5; calcium-binding domain is found at 810–857 (DINECTSLSEPCRPGFSCINTVGSYTCQRNPLICARGYHASDDGTKCV). One can recognise an EGF-like 6; calcium-binding domain in the interval 858-900 (DVNECETGVHRCGEGQVCHNLPGSYRCDCKAGFQRDAFGRGCI). The 42-residue stretch at 901 to 942 (DVNECWASPGRLCQHTCENTLGSYRCSCASGFLLAADGKRCE) folds into the EGF-like 7; calcium-binding domain. The region spanning 943–981 (DVNECEAQRCSQECANIYGSYQCYCRQGYQLAEDGHTCT) is the EGF-like 8; calcium-binding domain. The EGF-like 9; calcium-binding domain occupies 982–1024 (DIDECAQGAGILCTFRCLNVPGSYQCACPEQGYTMTANGRSCK). Positions 1025–1069 (DVDECALGTHNCSEAETCHNIQGSFRCLRFECPPNYVQVSKTKCE) constitute an EGF-like 10; calcium-binding domain. An N-linked (GlcNAc...) asparagine glycan is attached at Asn1035. Residues 1070–1184 (RTTCHDFLEC…MHIFFTTFAL (115 aa)) form a domain III region.

This sequence belongs to the fibulin family. In terms of assembly, homotrimer; disulfide-linked. Interacts with LAMA2. Interacts with FBN1 (via N-terminal domain). Forms a ternary complex with ELN and FBN1. In terms of processing, O-glycosylated with core 1 or possibly core 8 glycans. It is unsure if the O-glycosylation is on Thr-347 or Ser-348. As to expression, component of both basement membranes and other connective tissues. Expressed in heart, placenta and ovary.

The protein resides in the secreted. Its subcellular location is the extracellular space. The protein localises to the extracellular matrix. Its function is as follows. Its binding to fibronectin and some other ligands is calcium dependent. May act as an adapter that mediates the interaction between FBN1 and ELN. The polypeptide is Fibulin-2 (FBLN2) (Homo sapiens (Human)).